Consider the following 679-residue polypeptide: Methionine--tRNA ligase (679 aa).

The short motif at 15-25 is the 'HIGH' region element; it reads PYANGPVHIGH. Zn(2+)-binding residues include Cys-147, Cys-150, Cys-160, and Cys-163. Positions 332–336 match the 'KMSKS' region motif; the sequence is KISTS. Thr-335 serves as a coordination point for ATP. One can recognise a tRNA-binding domain in the interval 578-679; that stretch reads DFMKLDIRVG…KEVKPGSEVK (102 aa).

It belongs to the class-I aminoacyl-tRNA synthetase family. MetG type 1 subfamily. As to quaternary structure, homodimer. It depends on Zn(2+) as a cofactor.

It is found in the cytoplasm. It carries out the reaction tRNA(Met) + L-methionine + ATP = L-methionyl-tRNA(Met) + AMP + diphosphate. In terms of biological role, is required not only for elongation of protein synthesis but also for the initiation of all mRNA translation through initiator tRNA(fMet) aminoacylation. The polypeptide is Methionine--tRNA ligase (Parabacteroides distasonis (strain ATCC 8503 / DSM 20701 / CIP 104284 / JCM 5825 / NCTC 11152)).